The chain runs to 640 residues: Serine/threonine-protein phosphatase with EF-hands 1 (640 aa).

Positions valine 16–phenylalanine 45 constitute an IQ domain. A catalytic region spans residues isoleucine 122–serine 445. The Mn(2+) site is built by aspartate 173, histidine 175, aspartate 202, and asparagine 234. The Proton donor role is filled by histidine 235. 2 residues coordinate Mn(2+): histidine 286 and histidine 393. 3 consecutive EF-hand domains span residues alanine 473–leucine 508, arginine 556–histidine 591, and isoleucine 596–tyrosine 631. Positions 569, 571, 573, 580, 609, 611, 613, 615, and 620 each coordinate Ca(2+).

Belongs to the PPP phosphatase family. It depends on Mn(2+) as a cofactor. Mg(2+) is required as a cofactor.

The catalysed reaction is O-phospho-L-seryl-[protein] + H2O = L-seryl-[protein] + phosphate. The enzyme catalyses O-phospho-L-threonyl-[protein] + H2O = L-threonyl-[protein] + phosphate. With respect to regulation, activated by calcium. May have a role in the recovery or adaptation response of photoreceptors. May have a role in development. This Rattus norvegicus (Rat) protein is Serine/threonine-protein phosphatase with EF-hands 1 (Ppef1).